Here is a 318-residue protein sequence, read N- to C-terminus: Biotin synthase (318 aa).

The Radical SAM core domain maps to 44-270; the sequence is LCGDAVNLCS…INPTANIRLA (227 aa). 3 residues coordinate [4Fe-4S] cluster: cysteine 62, cysteine 66, and cysteine 69. Residues serine 106, cysteine 138, cysteine 198, and arginine 268 each contribute to the [2Fe-2S] cluster site.

Belongs to the radical SAM superfamily. Biotin synthase family. As to quaternary structure, homodimer. [4Fe-4S] cluster is required as a cofactor. The cofactor is [2Fe-2S] cluster.

The enzyme catalyses (4R,5S)-dethiobiotin + (sulfur carrier)-SH + 2 reduced [2Fe-2S]-[ferredoxin] + 2 S-adenosyl-L-methionine = (sulfur carrier)-H + biotin + 2 5'-deoxyadenosine + 2 L-methionine + 2 oxidized [2Fe-2S]-[ferredoxin]. The protein operates within cofactor biosynthesis; biotin biosynthesis; biotin from 7,8-diaminononanoate: step 2/2. Its function is as follows. Catalyzes the conversion of dethiobiotin (DTB) to biotin by the insertion of a sulfur atom into dethiobiotin via a radical-based mechanism. In Alkaliphilus metalliredigens (strain QYMF), this protein is Biotin synthase.